Reading from the N-terminus, the 124-residue chain is Putative membrane protein insertion efficiency factor (124 aa).

A disordered region spans residues Met-1–Trp-24. Positions Arg-12 to Trp-24 are enriched in low complexity.

It belongs to the UPF0161 family.

The protein resides in the cell inner membrane. Could be involved in insertion of integral membrane proteins into the membrane. The polypeptide is Putative membrane protein insertion efficiency factor (Mesorhizobium japonicum (strain LMG 29417 / CECT 9101 / MAFF 303099) (Mesorhizobium loti (strain MAFF 303099))).